We begin with the raw amino-acid sequence, 57 residues long: uncharacterized protein (57 aa).

Residues 34–54 (AALLDAAALVVIPGLLTAAAV) traverse the membrane as a helical segment.

The protein localises to the membrane. This is an uncharacterized protein from Dictyostelium discoideum (Social amoeba).